We begin with the raw amino-acid sequence, 505 residues long: ATP synthase subunit alpha, chloroplastic (505 aa).

170 to 177 (GDRQTGKT) contributes to the ATP binding site.

This sequence belongs to the ATPase alpha/beta chains family. F-type ATPases have 2 components, CF(1) - the catalytic core - and CF(0) - the membrane proton channel. CF(1) has five subunits: alpha(3), beta(3), gamma(1), delta(1), epsilon(1). CF(0) has four main subunits: a, b, b' and c.

It localises to the plastid. The protein resides in the chloroplast thylakoid membrane. It carries out the reaction ATP + H2O + 4 H(+)(in) = ADP + phosphate + 5 H(+)(out). Functionally, produces ATP from ADP in the presence of a proton gradient across the membrane. The alpha chain is a regulatory subunit. The polypeptide is ATP synthase subunit alpha, chloroplastic (Mesostigma viride (Green alga)).